The sequence spans 4621 residues: Dynein axonemal heavy chain 5 (4621 aa).

Residues 1 to 1938 form a stem region; that stretch reads MFRIGRRQLW…MIHITDVAFI (1938 aa). Coiled-coil stretches lie at residues 260–305 and 803–825; these read WIKQ…DQLK and LENA…DLIE. Residues 901-921 form a disordered region; it reads VCHENASPSGNTSGRREGHSE. Coiled-coil stretches lie at residues 1065-1094 and 1433-1462; these read AVKN…SINL and DVNI…DWQA. 4 AAA regions span residues 1939–2161, 2221–2440, 2547–2800, and 2913–3167; these read YQNE…VLRT, TAIS…IQNL, VYPP…IWQG, and LYNE…FRRS. Residues 1977–1984 and 2259–2266 contribute to the ATP site; these read GPAGTGKT and GPSGSGKT. Residues 3182–3479 are stalk; that stretch reads YKFIYEEKHM…QTLLEDADRC (298 aa). 3 coiled-coil regions span residues 3186-3299, 3423-3490, and 3729-3814; these read YEEK…QTIK, LKAN…STLI, and ILTE…EEYR. AAA regions lie at residues 3564 to 3794 and 4009 to 4223; these read LIDA…EVTQ and ARKY…FIQN. The stretch at 4389–4417 forms a coiled coil; the sequence is FLRQEIDRMQRVLSLVRSTLTELKLAVDG.

This sequence belongs to the dynein heavy chain family. As to quaternary structure, interacts with DNAL1. Consists of at least two heavy chains and a number of intermediate and light chains. Strongly expressed in lung and kidney and weaker expression seen in brain, heart and testis. In the brain, expressed in ependymal cells lining the brain ventricles and the aqueduct.

It is found in the cytoplasm. The protein localises to the cytoskeleton. The protein resides in the cilium axoneme. In terms of biological role, force generating protein of respiratory cilia. Produces force towards the minus ends of microtubules. Dynein has ATPase activity; the force-producing power stroke is thought to occur on release of ADP. Required for structural and functional integrity of the cilia of ependymal cells lining the brain ventricles. The polypeptide is Dynein axonemal heavy chain 5 (Mus musculus (Mouse)).